We begin with the raw amino-acid sequence, 96 residues long: Muconolactone Delta-isomerase 2 (96 aa).

Belongs to the muconolactone Delta-isomerase family. As to quaternary structure, homodecamer.

It catalyses the reaction (S)-muconolactone = (4,5-dihydro-5-oxofuran-2-yl)-acetate. Its pathway is aromatic compound metabolism; beta-ketoadipate pathway; 5-oxo-4,5-dihydro-2-furylacetate from catechol: step 3/3. This is Muconolactone Delta-isomerase 2 (catC2) from Acinetobacter lwoffii.